Here is a 113-residue protein sequence, read N- to C-terminus: Gamma-glutamylcyclotransferase family protein YtfP (113 aa).

This sequence belongs to the gamma-glutamylcyclotransferase family.

The polypeptide is Gamma-glutamylcyclotransferase family protein YtfP (ytfP) (Escherichia coli O157:H7).